The following is a 421-amino-acid chain: Histidine--tRNA ligase (421 aa).

The protein belongs to the class-II aminoacyl-tRNA synthetase family. In terms of assembly, homodimer.

Its subcellular location is the cytoplasm. It catalyses the reaction tRNA(His) + L-histidine + ATP = L-histidyl-tRNA(His) + AMP + diphosphate + H(+). This is Histidine--tRNA ligase from Solidesulfovibrio magneticus (strain ATCC 700980 / DSM 13731 / RS-1) (Desulfovibrio magneticus).